The following is a 202-amino-acid chain: Dephospho-CoA kinase (202 aa).

A DPCK domain is found at 6-202 (KVSITGDLSS…EYFYALKGAL (197 aa)). 14 to 19 (SSGKTE) serves as a coordination point for ATP.

It belongs to the CoaE family.

It is found in the cytoplasm. The enzyme catalyses 3'-dephospho-CoA + ATP = ADP + CoA + H(+). It functions in the pathway cofactor biosynthesis; coenzyme A biosynthesis; CoA from (R)-pantothenate: step 5/5. Its function is as follows. Catalyzes the phosphorylation of the 3'-hydroxyl group of dephosphocoenzyme A to form coenzyme A. The chain is Dephospho-CoA kinase from Chlamydia caviae (strain ATCC VR-813 / DSM 19441 / 03DC25 / GPIC) (Chlamydophila caviae).